Here is a 658-residue protein sequence, read N- to C-terminus: Carnitine O-palmitoyltransferase 2, mitochondrial (658 aa).

The transit peptide at 1–25 (MMPRLLFRAWPRCPSLVLGAPSRPL) directs the protein to the mitochondrion. Over 26–178 (SAVSGPDDYL…GLLEPEVFHL (153 aa)) the chain is Mitochondrial matrix. N6-succinyllysine is present on residues lysine 69 and lysine 85. Residues 179 to 208 (NPSKSDTDAFKRLIRFVPPSLSWYGAYLVN) constitute an intramembrane region (note=Mitochondrial inner membrane). Topologically, residues 209 to 658 (AYPLDMSQYF…DALEGKAIKT (450 aa)) are mitochondrial matrix. Lysine 239 carries the post-translational modification N6-acetyllysine; alternate. Lysine 239 is subject to N6-succinyllysine; alternate. Residue lysine 305 is modified to N6-acetyllysine. The Proton acceptor role is filled by histidine 372. Lysine 424 and lysine 439 each carry N6-succinyllysine. 452–464 (GKEFLKKKQLSPD) is a CoA binding site. Tyrosine 486, serine 488, and threonine 499 together coordinate (R)-carnitine. N6-acetyllysine; alternate is present on residues lysine 510 and lysine 544. Residues lysine 510 and lysine 544 each carry the N6-succinyllysine; alternate modification.

This sequence belongs to the carnitine/choline acetyltransferase family.

The protein resides in the mitochondrion inner membrane. The catalysed reaction is (R)-carnitine + hexadecanoyl-CoA = O-hexadecanoyl-(R)-carnitine + CoA. It catalyses the reaction octanoyl-CoA + (R)-carnitine = O-octanoyl-(R)-carnitine + CoA. The enzyme catalyses decanoyl-CoA + (R)-carnitine = O-decanoyl-(R)-carnitine + CoA. It carries out the reaction dodecanoyl-CoA + (R)-carnitine = O-dodecanoyl-R-carnitine + CoA. The catalysed reaction is tetradecanoyl-CoA + (R)-carnitine = O-tetradecanoyl-(R)-carnitine + CoA. It catalyses the reaction (R)-carnitine + octadecanoyl-CoA = O-octadecanoyl-(R)-carnitine + CoA. The enzyme catalyses eicosanoyl-CoA + (R)-carnitine = O-eicosanoyl-(R)-carnitine + CoA. It carries out the reaction (9Z)-tetradecenoyl-CoA + (R)-carnitine = O-(9Z)-tetradecenoyl-(R)-carnitine + CoA. The catalysed reaction is (5Z)-tetradecenoyl-CoA + (R)-carnitine = O-(5Z)-tetradecenoyl-(R)-carnitine + CoA. It catalyses the reaction (R)-carnitine + (9Z)-octadecenoyl-CoA = O-(9Z)-octadecenoyl-(R)-carnitine + CoA. The enzyme catalyses 4,8-dimethylnonanoyl-CoA + (R)-carnitine = O-4,8-dimethylnonanoyl-(R)-carnitine + CoA. It participates in lipid metabolism; fatty acid beta-oxidation. Functionally, involved in the intramitochondrial synthesis of acylcarnitines from accumulated acyl-CoA metabolites. Reconverts acylcarnitines back into the respective acyl-CoA esters that can then undergo beta-oxidation, an essential step for the mitochondrial uptake of long-chain fatty acids and their subsequent beta-oxidation in the mitochondrion. Active with medium (C8-C12) and long-chain (C14-C18) acyl-CoA esters. The chain is Carnitine O-palmitoyltransferase 2, mitochondrial from Rattus norvegicus (Rat).